Reading from the N-terminus, the 508-residue chain is Probable zinc metalloprotease MCYG_04217 (508 aa).

N111 is a glycosylation site (N-linked (GlcNAc...) asparagine). Positions 182, 202, and 238 each coordinate Zn(2+). N253 carries N-linked (GlcNAc...) asparagine glycosylation. D265 contacts Zn(2+). Residues 422 to 508 form the Fibronectin type-III domain; it reads MPRNVRVDTS…ERGVAVLPFP (87 aa). An N-linked (GlcNAc...) asparagine glycan is attached at N435.

Belongs to the peptidase M28 family. M28B subfamily. The cofactor is Zn(2+).

Its subcellular location is the secreted. The sequence is that of Probable zinc metalloprotease MCYG_04217 from Arthroderma otae (strain ATCC MYA-4605 / CBS 113480) (Microsporum canis).